The primary structure comprises 458 residues: MSSGRIVQIIGAVIDVEFPRDSVPSIYDALKVQGAETTLEVQQQLGDGVVRTIAMGSTEGLKRGLDVNNTGAAISVPVGKATLGRIMDVLGNPIDEAGPIGEEERWGIHRAAPSFAEQAGGNELLETGIKVIDLVCPFAKGGKVGLFGGAGVGKTVNMMELIRNIAIEHSGYSVFAGVGERTREGNDFYHEMKDSNVLDKVALVYGQMNEPPGNRLRVALTGLTMAEKFRDEGNDVLLFVDNIYRYTLAGTEVSALLGRMPSAVGYQPTLAEEMGVLQERITSTKQGSITSIQAVYVPADDLTDPSPATTFAHLDATVVLSRDIASLGIYPAVDPLDSTSRQLDPNVIGNDHYETARGVQYVLQRYKELKDIIAILGMDELSEADKQLVNRARKIQRFLSQPFFVAEVFTGASGKYVSLKDTIAGFKGILNGDYDHLPEQAFYMVGGIEEAIEKAKKL.

148 to 155 (GGAGVGKT) contributes to the ATP binding site.

It belongs to the ATPase alpha/beta chains family. F-type ATPases have 2 components, CF(1) - the catalytic core - and CF(0) - the membrane proton channel. CF(1) has five subunits: alpha(3), beta(3), gamma(1), delta(1), epsilon(1). CF(0) has three main subunits: a(1), b(2) and c(9-12). The alpha and beta chains form an alternating ring which encloses part of the gamma chain. CF(1) is attached to CF(0) by a central stalk formed by the gamma and epsilon chains, while a peripheral stalk is formed by the delta and b chains.

The protein resides in the cell inner membrane. The catalysed reaction is ATP + H2O + 4 H(+)(in) = ADP + phosphate + 5 H(+)(out). In terms of biological role, produces ATP from ADP in the presence of a proton gradient across the membrane. The catalytic sites are hosted primarily by the beta subunits. The sequence is that of ATP synthase subunit beta from Pseudomonas fluorescens (strain Pf0-1).